A 164-amino-acid polypeptide reads, in one-letter code: Lipoprotein signal peptidase (164 aa).

2 helical membrane-spanning segments follow: residues 68-88 (TILV…LWNA) and 96-116 (FWGL…RAMF). Active-site residues include aspartate 121 and aspartate 139. The helical transmembrane segment at 134-154 (TFNVADSAIVVGSCLLLIDLL) threads the bilayer.

This sequence belongs to the peptidase A8 family.

The protein localises to the cell inner membrane. The enzyme catalyses Release of signal peptides from bacterial membrane prolipoproteins. Hydrolyzes -Xaa-Yaa-Zaa-|-(S,diacylglyceryl)Cys-, in which Xaa is hydrophobic (preferably Leu), and Yaa (Ala or Ser) and Zaa (Gly or Ala) have small, neutral side chains.. Its pathway is protein modification; lipoprotein biosynthesis (signal peptide cleavage). In terms of biological role, this protein specifically catalyzes the removal of signal peptides from prolipoproteins. This chain is Lipoprotein signal peptidase, found in Solibacter usitatus (strain Ellin6076).